The following is a 359-amino-acid chain: Peptide chain release factor 1 (359 aa).

Gln236 carries the N5-methylglutamine modification. The tract at residues 286–305 (KKEMERSTMRKSQIGSGDRS) is disordered.

It belongs to the prokaryotic/mitochondrial release factor family. Methylated by PrmC. Methylation increases the termination efficiency of RF1.

It is found in the cytoplasm. Functionally, peptide chain release factor 1 directs the termination of translation in response to the peptide chain termination codons UAG and UAA. The chain is Peptide chain release factor 1 from Wolbachia pipientis wMel.